The sequence spans 195 residues: UPF0314 protein RHE_CH03951 (195 aa).

4 helical membrane-spanning segments follow: residues 14 to 34, 64 to 84, 128 to 148, and 150 to 170; these read AFWFVACLAVLVAQIIAEYLM, WYTPSHIIHGFLFYGLGYLIL, DSILNSAMDTVFMCLGFFFAA, and APVALTVVIAIFFEIFTGYVI.

The protein belongs to the UPF0314 family.

It is found in the cell membrane. This chain is UPF0314 protein RHE_CH03951, found in Rhizobium etli (strain ATCC 51251 / DSM 11541 / JCM 21823 / NBRC 15573 / CFN 42).